A 363-amino-acid chain; its full sequence is Bonnadiene synthase (363 aa).

Residues D93, D98, N234, S238, and E242 each contribute to the Mg(2+) site.

Belongs to the terpene synthase family. Mg(2+) serves as cofactor.

It catalyses the reaction (2E,6E,10E)-geranylgeranyl diphosphate = bonnadiene + diphosphate. The protein operates within secondary metabolite biosynthesis; terpenoid biosynthesis. Its function is as follows. Diterpene synthase that catalyzes the conversion of geranylgeranyl diphosphate (GGPP) to bonnadiene. Cannot use geranyl diphosphate (GPP), farnesyl diphosphate (FPP) and geranylfarnesyl diphosphate (GFPP). The chain is Bonnadiene synthase from Allokutzneria albata (Kibdelosporangium albatum).